We begin with the raw amino-acid sequence, 226 residues long: ATP-dependent dethiobiotin synthetase BioD (226 aa).

Position 12–17 (12–17 (GIGKTV)) interacts with ATP. T16 is a binding site for Mg(2+). K37 is a catalytic residue. A substrate-binding site is contributed by T41. Residues D49, 108–111 (EGAG), 169–170 (GS), and 197–199 (PAG) each bind ATP. Mg(2+) contacts are provided by D49 and E108.

The protein belongs to the dethiobiotin synthetase family. Homodimer. Requires Mg(2+) as cofactor.

It is found in the cytoplasm. The catalysed reaction is (7R,8S)-7,8-diammoniononanoate + CO2 + ATP = (4R,5S)-dethiobiotin + ADP + phosphate + 3 H(+). It participates in cofactor biosynthesis; biotin biosynthesis; biotin from 7,8-diaminononanoate: step 1/2. In terms of biological role, catalyzes a mechanistically unusual reaction, the ATP-dependent insertion of CO2 between the N7 and N8 nitrogen atoms of 7,8-diaminopelargonic acid (DAPA, also called 7,8-diammoniononanoate) to form a ureido ring. The protein is ATP-dependent dethiobiotin synthetase BioD of Mycolicibacterium gilvum (strain PYR-GCK) (Mycobacterium gilvum (strain PYR-GCK)).